Consider the following 1116-residue polypeptide: Auxin response factor 21 (1116 aa).

Residues 132-234 constitute a DNA-binding region (TF-B3); that stretch reads FCKTLTASDT…QLLLGIRRAN (103 aa). The interval 763 to 812 is disordered; the sequence is KTDDVPSTSTSPSTNSNPVLLQSIPSSSKNQSLTTAGKTSQSSVVLGPTI. The segment covering 768–780 has biased composition (low complexity); the sequence is PSTSTSPSTNSNP. Over residues 781-806 the composition is skewed to polar residues; it reads VLLQSIPSSSKNQSLTTAGKTSQSSV. Residues 998 to 1082 form the PB1 domain; sequence RTYTKVHKRG…RCIRILSPQE (85 aa).

It belongs to the ARF family. As to quaternary structure, homodimers and heterodimers. As to expression, expressed in roots, culms, leaves and young panicles.

Its subcellular location is the nucleus. Functionally, auxin response factors (ARFs) are transcriptional factors that bind specifically to the DNA sequence 5'-TGTCTC-3' found in the auxin-responsive promoter elements (AuxREs). The protein is Auxin response factor 21 (ARF21) of Oryza sativa subsp. japonica (Rice).